A 194-amino-acid chain; its full sequence is RNA polymerase II subunit A C-terminal domain phosphatase SSU72 like protein 1 (194 aa).

The protein belongs to the SSU72 phosphatase family.

Its subcellular location is the nucleus. The enzyme catalyses O-phospho-L-seryl-[protein] + H2O = L-seryl-[protein] + phosphate. It carries out the reaction O-phospho-L-threonyl-[protein] + H2O = L-threonyl-[protein] + phosphate. In terms of biological role, protein phosphatase that catalyzes the dephosphorylation of the C-terminal domain of RNA polymerase II. Plays a role in RNA processing and termination. The protein is RNA polymerase II subunit A C-terminal domain phosphatase SSU72 like protein 1 of Homo sapiens (Human).